A 967-amino-acid polypeptide reads, in one-letter code: Leucine-rich repeat-containing G-protein coupled receptor 6 (967 aa).

The N-terminal stretch at 1–24 (MPSPPGLRALWLCAALCASRRAGG) is a signal peptide. The Extracellular portion of the chain corresponds to 25 to 567 (APQPGPGPTA…LFESWGIRLA (543 aa)). Positions 26–66 (PQPGPGPTACPAPCHCQEDGIMLSADCSELGLSAVPGDLDP) constitute an LRRNT domain. Residue asparagine 77 is glycosylated (N-linked (GlcNAc...) asparagine). LRR repeat units lie at residues 91–112 (FLEE…AFSG), 115–136 (SLKI…ALWE), 139–160 (SLQS…SFEG), 163–186 (SLRH…NNLP), 187–208 (ALQA…AFQN), 211–232 (SLVV…SFEG), 235–256 (NLET…IRTL), 258–279 (RLQE…AFMG), 282–303 (LLQT…AFQY), 306–328 (KLHT…KGTT), 329–350 (SLEI…MCQQ), 353–374 (RLRV…HRCQ), 375–396 (KLEE…TFSQ), 399–420 (SLQA…AFST), and 423–443 (SLVK…AGLG). N-linked (GlcNAc...) asparagine glycosylation is present at asparagine 208. Residues 568 to 588 (VWAIVLLSVLCNGLVLLTVFA) traverse the membrane as a helical segment. The Cytoplasmic portion of the chain corresponds to 589–598 (GGPVPLPPVK). A helical membrane pass occupies residues 599–619 (FVVGAIAGANTLTGISCGLLA). Residues 620-644 (SVDALTFGQFSEYGARWETGLGCRA) are Extracellular-facing. A disulfide bond links cysteine 642 and cysteine 717. Residues 645-665 (TGFLAVLGSEASVLLLTLAAV) traverse the membrane as a helical segment. The Cytoplasmic segment spans residues 666–687 (QCSVSVSCVRAYGKSPSLGSVR). The chain crosses the membrane as a helical span at residues 688–708 (AGVLGCLALAGLAAALPLASV). At 709–727 (GEYGASPLCLPYAPPEGQP) the chain is on the extracellular side. Residues 728–748 (AALGFTVALVMMNSFCFLVVA) traverse the membrane as a helical segment. Over 749–774 (GAYIKLYCDLPRGDFEAVWDCAMVRH) the chain is Cytoplasmic. Residues 775 to 795 (VAWLIFADGLLYCPVAFLSFA) traverse the membrane as a helical segment. Residues 796 to 809 (SMLGLFPVTPEAVK) lie on the Extracellular side of the membrane. A helical transmembrane segment spans residues 810 to 830 (SVLLVVLPLPACLNPLLYLLF). The Cytoplasmic segment spans residues 831 to 967 (NPHFRDDLRR…PSGLAFASHV (137 aa)).

This sequence belongs to the G-protein coupled receptor 1 family.

The protein resides in the cell membrane. In terms of biological role, receptor for R-spondins that potentiates the canonical Wnt signaling pathway and acts as a marker of multipotent stem cells in the epidermis. Upon binding to R-spondins (RSPO1, RSPO2, RSPO3 or RSPO4), associates with phosphorylated LRP6 and frizzled receptors that are activated by extracellular Wnt receptors, triggering the canonical Wnt signaling pathway to increase expression of target genes. In contrast to classical G-protein coupled receptors, does not activate heterotrimeric G-proteins to transduce the signal. May act as a tumor suppressor. This Homo sapiens (Human) protein is Leucine-rich repeat-containing G-protein coupled receptor 6 (LGR6).